The sequence spans 480 residues: Mannose-1-phosphate guanylyltransferase ManC (480 aa).

The protein belongs to the mannose-6-phosphate isomerase type 2 family.

The catalysed reaction is alpha-D-mannose 1-phosphate + GTP + H(+) = GDP-alpha-D-mannose + diphosphate. It functions in the pathway nucleotide-sugar biosynthesis; GDP-alpha-D-mannose biosynthesis; GDP-alpha-D-mannose from alpha-D-mannose 1-phosphate (GTP route): step 1/1. Its function is as follows. Involved in the biosynthesis of the capsular polysaccharide colanic acid. The chain is Mannose-1-phosphate guanylyltransferase ManC (manC) from Salmonella typhimurium (strain LT2 / SGSC1412 / ATCC 700720).